A 422-amino-acid polypeptide reads, in one-letter code: Glutamate 2,3-aminomutase (422 aa).

The Radical SAM core domain maps to 150 to 371 (RRYPDRLIIN…AIPTYIVNAP (222 aa)). [4Fe-4S] cluster contacts are provided by C164, C168, and C171. K376 bears the N6-(pyridoxal phosphate)lysine mark.

This sequence belongs to the radical SAM superfamily. It depends on pyridoxal 5'-phosphate as a cofactor. [4Fe-4S] cluster is required as a cofactor.

The enzyme catalyses L-glutamate = 3-aminopentanedioate. In terms of biological role, catalyzes the interconversion of L-glutamate and L-beta-glutamate. Does not have L-lysine 2,3-aminomutase activity. This is Glutamate 2,3-aminomutase (eam) from Clostridioides difficile (strain 630) (Peptoclostridium difficile).